Here is a 2457-residue protein sequence, read N- to C-terminus: Large tegument protein deneddylase (2457 aa).

A deubiquitination activity region spans residues methionine 1 to leucine 234. Positions glutamate 13 to phenylalanine 224 constitute a Peptidase C76 domain. Residues cysteine 33, aspartate 163, and histidine 165 contribute to the active site. Disordered stretches follow at residues glutamate 281–valine 350, isoleucine 2064–proline 2131, glycine 2164–glutamine 2360, and glycine 2387–histidine 2407. Residues serine 293–threonine 302 show a composition bias toward basic and acidic residues. The segment covering threonine 314 to glycine 334 has biased composition (acidic residues). Basic and acidic residues predominate over residues threonine 2080–glutamine 2091. Positions serine 2115–proline 2131 are enriched in pro residues. Over residues histidine 2173–arginine 2186 the composition is skewed to polar residues. Basic and acidic residues predominate over residues glycine 2387 to valine 2398.

Belongs to the herpesviridae large tegument protein family. As to quaternary structure, interacts with host CUL1 and CUL4A; these interactions inhibit the E3 ligase activity of cullins. Interacts with inner tegument protein. Interacts with capsid vertex specific component CVC2. Interacts with the major capsid protein/MCP.

Its subcellular location is the virion tegument. The protein resides in the host cytoplasm. The protein localises to the host nucleus. The enzyme catalyses Thiol-dependent hydrolysis of ester, thioester, amide, peptide and isopeptide bonds formed by the C-terminal Gly of ubiquitin (a 76-residue protein attached to proteins as an intracellular targeting signal).. In terms of biological role, large tegument protein that plays multiple roles in the viral cycle. During viral entry, remains associated with the capsid while most of the tegument is detached and participates in the capsid transport toward the host nucleus. Plays a role in the routing of the capsid at the nuclear pore complex and subsequent uncoating. Within the host nucleus, acts as a deneddylase and promotes the degradation of nuclear CRLs (cullin-RING ubiquitin ligases) and thereby stabilizes nuclear CRL substrates, while cytoplasmic CRLs remain unaffected. These modifications prevent host cell cycle S-phase progression and create a favorable environment allowing efficient viral genome replication. Participates later in the secondary envelopment of capsids. Indeed, plays a linker role for the association of the outer viral tegument to the capsids together with the inner tegument protein. The sequence is that of Large tegument protein deneddylase from Apodemus sylvaticus (European woodmouse).